Here is an 86-residue protein sequence, read N- to C-terminus: Protein Vpu (86 aa).

The Extracellular portion of the chain corresponds to 1-12 (MLELIGRIDYRL). A helical transmembrane segment spans residues 13 to 33 (GVGALIVALIIVIIVWTIAYI). At 34 to 86 (EYRKLVRQRRIDWLVKRIKERAEDSGNESGGDTEELETMVDMGHLRLLDGNDL) the chain is on the cytoplasmic side. A phosphoserine; by host CK2 mark is found at serine 58 and serine 62.

Belongs to the HIV-1 VPU protein family. Homopentamer. Interacts with host CD4 and BRTC; these interactions induce proteasomal degradation of CD4. Interacts with host BST2; this interaction leads to the degradation of host BST2. Interacts with host FBXW11. Interacts with host AP1M1; this interaction plays a role in the mistrafficking and subsequent degradation of host BST2. Interacts with host RANBP2; this interaction allows Vpu to down-regulate host BLM sumoylation. In terms of processing, phosphorylated by host CK2. This phosphorylation is necessary for interaction with human BTRC and degradation of CD4.

The protein localises to the host membrane. Ion channel activity is inhibited by hexamethylene amiloride in vitro. Functionally, enhances virion budding, by targeting human CD4 and Tetherin/BST2 to proteasome degradation. Degradation of CD4 prevents any unwanted premature interactions between viral Env and its host receptor CD4 in the endoplasmic reticulum. Degradation of antiretroviral protein Tetherin/BST2 is important for virion budding, as BST2 tethers new viral particles to the host cell membrane. Mechanistically, Vpu bridges either CD4 or BST2 to BTRC, a substrate recognition subunit of the Skp1/Cullin/F-box protein E3 ubiquitin ligase, induces their ubiquitination and subsequent proteasomal degradation. The alteration of the E3 ligase specificity by Vpu seems to promote the degradation of host IKBKB, leading to NF-kappa-B down-regulation and subsequent apoptosis. Acts as a viroporin that forms an oligomeric ion channel in membranes. Modulates the host DNA repair mechanisms to promote degradation of nuclear viral cDNA in cells that are already productively infected in order to suppress immune sensing and proviral hyper-integration (superinfection). Manipulates PML-NBs and modulates SUMOylation of host BLM protein thereby enhancing its DNA-end processing activity toward viral unintegrated linear DNA. Also inhibits RAD52-mediated homologous repair of viral cDNA, preventing the generation of dead-end circular forms of single copies of the long terminal repeat and permitting sustained nucleolytic attack. This chain is Protein Vpu, found in Homo sapiens (Human).